The chain runs to 192 residues: Imidazoleglycerol-phosphate dehydratase (192 aa).

It belongs to the imidazoleglycerol-phosphate dehydratase family.

It is found in the cytoplasm. The enzyme catalyses D-erythro-1-(imidazol-4-yl)glycerol 3-phosphate = 3-(imidazol-4-yl)-2-oxopropyl phosphate + H2O. Its pathway is amino-acid biosynthesis; L-histidine biosynthesis; L-histidine from 5-phospho-alpha-D-ribose 1-diphosphate: step 6/9. The chain is Imidazoleglycerol-phosphate dehydratase from Staphylococcus epidermidis (strain ATCC 12228 / FDA PCI 1200).